Reading from the N-terminus, the 768-residue chain is Tripartite motif-containing protein 67 (768 aa).

The RING-type; degenerate zinc-finger motif lies at 7–42 (CPVCGSLFREPIILPCSHNVCLPCARTIAVQTPDGE). Residues 55–70 (AAAAATPPDQDAAAGA) show a composition bias toward low complexity. Disordered stretches follow at residues 55-74 (AAAA…TSGG) and 247-284 (QPPP…ASAP). Residues 201 to 248 (AICQLCDRTPPEPAATLCEQCDVLYCATCQLKCHPSRGPFAKHRLVQP) form a B box-type 1; degenerate zinc finger. Pro residues predominate over residues 247–257 (QPPPPPTPPEA). The B box-type 2 zinc finger occupies 285–327 (RKFPTCPEHEMENYSMYCVSCRSPVCYMCLEEGRHSKHEVKPL). Cys290, His293, Cys313, and His319 together coordinate Zn(2+). Residues 332-369 (KQHKAQLSQALNGVSDKAKEAKEFLVQLKNILQQIQEN) adopt a coiled-coil conformation. Residues 435–493 (IKEDDPSGFLQISDALIKRVQTSQEQWVKGALEPKVSAEFDLTLDSEPLLQAIHQLDFV) form the COS domain. In terms of domain architecture, Fibronectin type-III spans 498–592 (PPVPLLQLEK…KTVVLQTSDV (95 aa)). The B30.2/SPRY domain occupies 574-765 (NSSGVGPYSK…VPTNLGRPKL (192 aa)).

It localises to the cytoplasm. Its subcellular location is the cytoskeleton. In Mus musculus (Mouse), this protein is Tripartite motif-containing protein 67 (Trim67).